Here is a 570-residue protein sequence, read N- to C-terminus: Dwarfin sma-4 (570 aa).

A disordered region spans residues 115-134; that stretch reads SSQASSQPPPTPTVNPTPIP. Pro residues predominate over residues 121–134; sequence QPPPTPTVNPTPIP. In terms of domain architecture, MH1 spans 150–273; the sequence is QISHVLQCYQ…YERVVSNRIT (124 aa). Cys203, Cys247, Cys258, and His263 together coordinate Zn(2+). The MH2 domain maps to 350–570; sequence WCSIIYYELD…LKNSSQFGSS (221 aa).

This sequence belongs to the dwarfin/SMAD family.

It localises to the cytoplasm. It is found in the nucleus. Its function is as follows. Involved in TGF-beta pathway. This is Dwarfin sma-4 (sma-4) from Caenorhabditis elegans.